Here is a 443-residue protein sequence, read N- to C-terminus: Glucose-6-phosphate isomerase (443 aa).

The active-site Proton donor is the Glu-285. Residues His-306 and Lys-420 contribute to the active site.

It belongs to the GPI family.

The protein localises to the cytoplasm. The enzyme catalyses alpha-D-glucose 6-phosphate = beta-D-fructose 6-phosphate. The protein operates within carbohydrate biosynthesis; gluconeogenesis. It functions in the pathway carbohydrate degradation; glycolysis; D-glyceraldehyde 3-phosphate and glycerone phosphate from D-glucose: step 2/4. Catalyzes the reversible isomerization of glucose-6-phosphate to fructose-6-phosphate. The chain is Glucose-6-phosphate isomerase from Staphylococcus haemolyticus (strain JCSC1435).